Consider the following 144-residue polypeptide: Transcription antitermination protein NusB (144 aa).

Belongs to the NusB family.

Its function is as follows. Involved in transcription antitermination. Required for transcription of ribosomal RNA (rRNA) genes. Binds specifically to the boxA antiterminator sequence of the ribosomal RNA (rrn) operons. The sequence is that of Transcription antitermination protein NusB from Dictyoglomus thermophilum (strain ATCC 35947 / DSM 3960 / H-6-12).